A 1015-amino-acid chain; its full sequence is Putative calcium-transporting ATPase 7, plasma membrane-type (1015 aa).

Met-1 bears the N-acetylmethionine mark. At 1 to 161 (MESYLNSNFD…NKFAESELRS (161 aa)) the chain is on the cytoplasmic side. An interaction with calmodulin region spans residues 20-31 (VLEKWRNLCSVV). Ser-45 bears the Phosphoserine; by CPK mark. A helical transmembrane segment spans residues 162-182 (FWVFVWEALQDMTLMILGVCA). Over 183-200 (FVSLIVGIATEGWPQGSH) the chain is Lumenal. A helical membrane pass occupies residues 201 to 221 (DGLGIVASILLVVFVTATSDY). Residues 222–349 (RQSLQFRDLD…DDETPLQVKL (128 aa)) are Cytoplasmic-facing. The chain crosses the membrane as a helical span at residues 350–369 (NGVATIIGKIGLSFAIVTFA). Over 370 to 399 (VLVQGMFMRKLSLGPHWWWSGDDALELLEY) the chain is Lumenal. A helical membrane pass occupies residues 400–417 (FAIAVTIVVVAVPEGLPL). Topologically, residues 418–811 (AVTLSLAFAM…KWGRSVYINI (394 aa)) are cytoplasmic. The active-site 4-aspartylphosphate intermediate is Asp-455. Mg(2+)-binding residues include Asp-756 and Asp-760. A helical transmembrane segment spans residues 812–830 (QKFVQFQLTVNVVALIVNF). Residues 831–841 (SSACLTGSAPL) lie on the Lumenal side of the membrane. The chain crosses the membrane as a helical span at residues 842-862 (TAVQLLWVNMIMDTLGALALA). Over 863–882 (TEPPNNELMKRMPVGRRGNF) the chain is Cytoplasmic. Residues 883–905 (ITNAMWRNILGQAVYQFIIIWIL) traverse the membrane as a helical segment. Topologically, residues 906–917 (QAKGKSMFGLVG) are lumenal. A helical transmembrane segment spans residues 918-939 (SDSTLVLNTLIFNCFVFCQVFN). At 940-957 (EVSSREMEEIDVFKGILD) the chain is on the cytoplasmic side. A helical transmembrane segment spans residues 958 to 979 (NYVFVVVIGATVFFQIIIIEFL). Topologically, residues 980-989 (GTFASTTPLT) are lumenal. Residues 990–1011 (IVQWFFSIFVGFLGMPIAAGLK) form a helical membrane-spanning segment. Over 1012–1015 (KIPV) the chain is Cytoplasmic.

This sequence belongs to the cation transport ATPase (P-type) (TC 3.A.3) family. Type IIB subfamily.

The protein resides in the membrane. The catalysed reaction is Ca(2+)(in) + ATP + H2O = Ca(2+)(out) + ADP + phosphate + H(+). Its activity is regulated as follows. Activated by calmodulin. Its function is as follows. This magnesium-dependent enzyme catalyzes the hydrolysis of ATP coupled with the translocation of calcium from the cytosol out of the cell or into organelles. The polypeptide is Putative calcium-transporting ATPase 7, plasma membrane-type (ACA7) (Arabidopsis thaliana (Mouse-ear cress)).